The primary structure comprises 343 residues: UPF0157 protein YqkA (343 aa).

In terms of domain architecture, N-acetyltransferase spans 8–144 (KEATIAREIL…VKAAQGLLLS (137 aa)). Residues 135–343 (VKAAQGLLLS…ENDENGGFTL (209 aa)) form a UPF0157 region.

It in the C-terminal section; belongs to the UPF0157 (GrpB) family.

This is UPF0157 protein YqkA (yqkA) from Bacillus subtilis (strain 168).